The chain runs to 427 residues: MESLTLQPIARVDGTINLPGSKSVSNRALLLAALAHGKTVLTNLLDSDDVRHMLNALTALGVSYTLSADRTRCEIIGNGGPLHAESARELFLGNAGTAMRPLAAALCLGSNDIVLTGEPRMKERPIGHLVDALRQGGAKITYLEQENYPPLRLQGGFTGGNVDVDGSVSSQFLTALLMTAPLAPEDTVIRIKGDLVSKPYIDITLNLMKTFGVEIENQHYQQFVVKGGQSYQSPGTYLVEGDASSASYFLAAAAIRGGTVKVTGIGRNSMQGDIRFADVLEKMGATICWGDDYISCTRGELNAIDMDMNHIPDAAMTIATAALFAKGTTTLRNIYNWRVKETDRLFAMATELRKVGAEVEEGHDFIRITPPEKLKFAEIATYNDHRMAMCFSLVALSDTPVTILDPKCTAKTFPDYFEQLARISQPG.

3 residues coordinate 3-phosphoshikimate: Lys22, Ser23, and Arg27. Lys22 contacts phosphoenolpyruvate. Residues Gly96 and Arg124 each contribute to the phosphoenolpyruvate site. 7 residues coordinate 3-phosphoshikimate: Ser169, Ser170, Gln171, Ser197, Asp313, Asn336, and Lys340. Gln171 is a binding site for phosphoenolpyruvate. Catalysis depends on Asp313, which acts as the Proton acceptor. Positions 344, 386, and 411 each coordinate phosphoenolpyruvate.

This sequence belongs to the EPSP synthase family. In terms of assembly, monomer.

The protein localises to the cytoplasm. It catalyses the reaction 3-phosphoshikimate + phosphoenolpyruvate = 5-O-(1-carboxyvinyl)-3-phosphoshikimate + phosphate. It functions in the pathway metabolic intermediate biosynthesis; chorismate biosynthesis; chorismate from D-erythrose 4-phosphate and phosphoenolpyruvate: step 6/7. In terms of biological role, catalyzes the transfer of the enolpyruvyl moiety of phosphoenolpyruvate (PEP) to the 5-hydroxyl of shikimate-3-phosphate (S3P) to produce enolpyruvyl shikimate-3-phosphate and inorganic phosphate. This chain is 3-phosphoshikimate 1-carboxyvinyltransferase, found in Escherichia coli O1:K1 / APEC.